Here is a 419-residue protein sequence, read N- to C-terminus: Multifunctional CCA protein (419 aa).

ATP-binding residues include Gly-8 and Arg-11. The CTP site is built by Gly-8 and Arg-11. 2 residues coordinate Mg(2+): Asp-21 and Asp-23. Residues Arg-91, Arg-137, and Arg-140 each coordinate ATP. CTP is bound by residues Arg-91, Arg-137, and Arg-140. In terms of domain architecture, HD spans 226–327 (TGVHLMMVLD…VRLFDRCDAW (102 aa)).

This sequence belongs to the tRNA nucleotidyltransferase/poly(A) polymerase family. Bacterial CCA-adding enzyme type 1 subfamily. As to quaternary structure, monomer. Can also form homodimers and oligomers. The cofactor is Mg(2+). Requires Ni(2+) as cofactor.

The enzyme catalyses a tRNA precursor + 2 CTP + ATP = a tRNA with a 3' CCA end + 3 diphosphate. It catalyses the reaction a tRNA with a 3' CCA end + 2 CTP + ATP = a tRNA with a 3' CCACCA end + 3 diphosphate. Catalyzes the addition and repair of the essential 3'-terminal CCA sequence in tRNAs without using a nucleic acid template. Adds these three nucleotides in the order of C, C, and A to the tRNA nucleotide-73, using CTP and ATP as substrates and producing inorganic pyrophosphate. tRNA 3'-terminal CCA addition is required both for tRNA processing and repair. Also involved in tRNA surveillance by mediating tandem CCA addition to generate a CCACCA at the 3' terminus of unstable tRNAs. While stable tRNAs receive only 3'-terminal CCA, unstable tRNAs are marked with CCACCA and rapidly degraded. The polypeptide is Multifunctional CCA protein (Leptothrix cholodnii (strain ATCC 51168 / LMG 8142 / SP-6) (Leptothrix discophora (strain SP-6))).